The chain runs to 315 residues: DNA-directed RNA polymerase subunit alpha (315 aa).

The alpha N-terminal domain (alpha-NTD) stretch occupies residues 1-228 (MLEIEKPKIE…EHFKLFMTLT (228 aa)). The segment at 245 to 315 (KEKVLEMTIE…LGLGLKKSDE (71 aa)) is alpha C-terminal domain (alpha-CTD).

It belongs to the RNA polymerase alpha chain family. As to quaternary structure, homodimer. The RNAP catalytic core consists of 2 alpha, 1 beta, 1 beta' and 1 omega subunit. When a sigma factor is associated with the core the holoenzyme is formed, which can initiate transcription.

The enzyme catalyses RNA(n) + a ribonucleoside 5'-triphosphate = RNA(n+1) + diphosphate. Its function is as follows. DNA-dependent RNA polymerase catalyzes the transcription of DNA into RNA using the four ribonucleoside triphosphates as substrates. This chain is DNA-directed RNA polymerase subunit alpha, found in Clostridium novyi (strain NT).